Reading from the N-terminus, the 712-residue chain is Ferric reductase transmembrane component 6 (712 aa).

A signal peptide spans 1–17; sequence MHRTLLFLTWLISLTKA. Residues 18 to 167 are Vacuolar-facing; the sequence is FNIKLPHTEK…HAHAYNLDIS (150 aa). N-linked (GlcNAc...) asparagine glycans are attached at residues Asn89, Asn112, and Asn124. Residues 168 to 188 traverse the membrane as a helical segment; the sequence is SVYGAYLTYYFVIVGIIAVFF. At 189–244 the chain is on the cytoplasmic side; the sequence is HMSHYNGLNRALFASRFVNYIRGHFVLPTFLVDKHANHFKFLNVEVFTGLMPNSLE. The chain crosses the membrane as a helical span at residues 245-265; that stretch reads AWIIFGYTLANIIFLSISYII. Topologically, residues 266-287 are vacuolar; it reads DPYNLIFNSHLSQFTRLLADRS. The Ferric oxidoreductase domain occupies 287-411; the sequence is SGILAFTQFP…YCCWQHVKIF (125 aa). The chain crosses the membrane as a helical span at residues 288 to 308; sequence GILAFTQFPLIIIFTARNSFL. The Cytoplasmic segment spans residues 309–328; sequence EFLTGVKFNSFISFHKWIGR. Heme contacts are provided by His323 and His337. The helical transmembrane segment at 329 to 349 threads the bilayer; that stretch reads IMVLNATIHSLSYSLFAIINH. Topologically, residues 350-360 are vacuolar; the sequence is AFKISNKQLYW. The chain crosses the membrane as a helical span at residues 361-381; that stretch reads KFGIASITVLCVLLVLSLGIV. The Cytoplasmic portion of the chain corresponds to 382–387; the sequence is RKRHYE. Residues 388–408 form a helical membrane-spanning segment; sequence FFLYTHIILALLFFYCCWQHV. 2 residues coordinate heme: His393 and His407. Residues 409–416 lie on the Vacuolar side of the membrane; that stretch reads KIFNGWKE. Residues 412 to 546 enclose the FAD-binding FR-type domain; that stretch reads NGWKEWIVVS…EGPYGPSNLH (135 aa). The helical transmembrane segment at 417-437 threads the bilayer; it reads WIVVSLLIWGLEKLFRIWNIL. Topologically, residues 438–712 are cytoplasmic; that stretch reads QFRFPKATLI…IEYFEEYQCW (275 aa). 493 to 499 provides a ligand contact to FAD; it reads HPFTIID. NADP(+) contacts are provided by residues 538 to 541 and 678 to 679; these read GPYG and CG.

This sequence belongs to the ferric reductase (FRE) family. Requires FAD as cofactor.

Its subcellular location is the vacuole membrane. The enzyme catalyses 2 a Fe(II)-siderophore + NADP(+) + H(+) = 2 a Fe(III)-siderophore + NADPH. Its function is as follows. Metalloreductase responsible for reducing vacuolar iron and copper prior to transport into the cytosol. Catalyzes the reduction of Fe(3+) to Fe(2+) and Cu(2+) to Cu(+), respectively, which can then be transported by the respective vacuolar efflux systems to the cytosol. This Saccharomyces cerevisiae (strain ATCC 204508 / S288c) (Baker's yeast) protein is Ferric reductase transmembrane component 6 (FRE6).